Reading from the N-terminus, the 112-residue chain is Prostatic steroid-binding protein C2 (112 aa).

The first 20 residues, 1-20 (MRLSLCLLTILVVCCYEANG), serve as a signal peptide directing secretion. Gln21 carries the post-translational modification Pyrrolidone carboxylic acid.

It belongs to the secretoglobin family. Lipophilin subfamily. Prostatein is composed of three different peptides called C1, C2 and C3. These form covalent C1:C3 (F) and C2:C3 (S) heterodimers whose noncovalent association forms tetrameric (C1:C3/C3:C2) prostatein molecules. In terms of processing, linked by three disulfide bonds to C3. Post-translationally, the N-terminus is blocked.

It localises to the secreted. Part of prostatein which is the major secretory glycoprotein of ventral prostate gland. The chain is Prostatic steroid-binding protein C2 (Psbpc2) from Rattus norvegicus (Rat).